The sequence spans 343 residues: N-malonyltransferase FDB2 (343 aa).

C107 (acyl-thioester intermediate) is an active-site residue. Catalysis depends on H155, which acts as the Proton acceptor. D170 is a catalytic residue.

Belongs to the arylamine N-acetyltransferase family.

It functions in the pathway xenobiotic degradation. Functionally, N-malonyltransferase; part of the Fusarium detoxification of benzoxazolinone cluster involved in the degradation of benzoxazolinones produced by the host plant. Maize, wheat, and rye produce the 2 benzoxazinone phytoanticipins 2,4-dihy-droxy-7-methoxy-1,4-benzoxazin-3-one (DIMBOA) and 2,4-dihydroxy-1,4-benzoxazin-3-one (DIBOA) that, due to their inherent instability once released, spontaneously degrade to the more stable corresponding benzoxazolinones, 6-methoxy-2-benzoxazolinone (MBOA) and 2-benzoxazolinone (BOA), respectively. The first step in the detoxification of benzoxazolinones involves the hydrolysis of the cyclic ester bond of benzoxazolinones by the gamma-lactamase FDB1 to aminophenols. FDB1 is able to convert BOA into 2-aminophenol (2-AP), as well as MBOA into 5-methoxy-2-aminophenol (2-AMP). The N-malonyltransferase FDB2 then metabolizes aminophenols via N-malonylation to non-toxic malonamic acids. FDB2 converts 2-AP into N-(2-hydroxyphenyl) malonamic acid (HPMA) and 2-AMP into N-(2-hydroxy-4-methoxyphenyl) malonamic acid (HMPMA). The cluster also contains 2 transcription factors (FDB3 and FPSE_08121), an aldo-keto reductase (FPSE_08125) that possibly associates with a ketone component of BOA and MBOA degradation, an esterase (FPSE_08126), an acyl-CoA transferase (FPSE_08120), a solute carrier protein (FPSE_08119) and a transmembrane transporter (FPSE_08127) proposed to shuttle metabolites of benzoxazolinone degradation. This is N-malonyltransferase FDB2 from Fusarium pseudograminearum (strain CS3096) (Wheat and barley crown-rot fungus).